Consider the following 248-residue polypeptide: 1-(5-phosphoribosyl)-5-[(5-phosphoribosylamino)methylideneamino] imidazole-4-carboxamide isomerase (248 aa).

Asp8 (proton acceptor) is an active-site residue. Residue Asp131 is the Proton donor of the active site.

This sequence belongs to the HisA/HisF family.

Its subcellular location is the cytoplasm. The enzyme catalyses 1-(5-phospho-beta-D-ribosyl)-5-[(5-phospho-beta-D-ribosylamino)methylideneamino]imidazole-4-carboxamide = 5-[(5-phospho-1-deoxy-D-ribulos-1-ylimino)methylamino]-1-(5-phospho-beta-D-ribosyl)imidazole-4-carboxamide. The protein operates within amino-acid biosynthesis; L-histidine biosynthesis; L-histidine from 5-phospho-alpha-D-ribose 1-diphosphate: step 4/9. In Cupriavidus taiwanensis (strain DSM 17343 / BCRC 17206 / CCUG 44338 / CIP 107171 / LMG 19424 / R1) (Ralstonia taiwanensis (strain LMG 19424)), this protein is 1-(5-phosphoribosyl)-5-[(5-phosphoribosylamino)methylideneamino] imidazole-4-carboxamide isomerase.